The following is a 408-amino-acid chain: BTB/POZ and MATH domain-containing protein 3 (408 aa).

Positions 24–158 (NGSHQFTIQG…DDCLVINCTV (135 aa)) constitute an MATH domain. In terms of domain architecture, BTB spans 194–261 (CDIAFQVGDE…IYTDVLPNVH (68 aa)).

This sequence belongs to the Tdpoz family. As to quaternary structure, homodimer or heterodimer with BPM3 and BPM5. Interacts with CUL3A and CUL3B. Interacts with RAP2-4 and RAP2-13. Binds to MYB56 at the promoter of FLOWERING LOCUS T (FT). In terms of tissue distribution, ubiquitous.

It is found in the nucleus. It localises to the cytoplasm. It participates in protein modification; protein ubiquitination. Functionally, may act as a substrate-specific adapter of an E3 ubiquitin-protein ligase complex (CUL3-RBX1-BTB) which mediates the ubiquitination and subsequent proteasomal degradation of target proteins. This chain is BTB/POZ and MATH domain-containing protein 3, found in Arabidopsis thaliana (Mouse-ear cress).